We begin with the raw amino-acid sequence, 604 residues long: Elongation factor 4 (604 aa).

Residues 8-190 (DKIRNFSIIA…AIVNRLPPPR (183 aa)) enclose the tr-type G domain. Residues 20–25 (DHGKST) and 137–140 (NKID) each bind GTP.

The protein belongs to the TRAFAC class translation factor GTPase superfamily. Classic translation factor GTPase family. LepA subfamily.

The protein resides in the cell inner membrane. It carries out the reaction GTP + H2O = GDP + phosphate + H(+). In terms of biological role, required for accurate and efficient protein synthesis under certain stress conditions. May act as a fidelity factor of the translation reaction, by catalyzing a one-codon backward translocation of tRNAs on improperly translocated ribosomes. Back-translocation proceeds from a post-translocation (POST) complex to a pre-translocation (PRE) complex, thus giving elongation factor G a second chance to translocate the tRNAs correctly. Binds to ribosomes in a GTP-dependent manner. This Hyphomonas neptunium (strain ATCC 15444) protein is Elongation factor 4.